A 1744-amino-acid polypeptide reads, in one-letter code: Tanabin (1744 aa).

Positions 1–12 are head; that stretch reads MEGYLASVSLGE. Residues 8 to 48 form a coil 1A region; it reads VSLGEESTQMWSLNKRLEAYLSRVKALEEENELLRKEIHSL. In terms of domain architecture, IF rod spans 13-320; that stretch reads ESTQMWSLNK…SLLEAESTRI (308 aa). Positions 49 to 60 are linker 1; that stretch reads RSSKSERCWKKK. A coil 1B region spans residues 61-156; it reads HHEEMMKLRD…RDHEEEKALM (96 aa). A linker 12 region spans residues 157–179; the sequence is EEEIASFSQRLENFRVAPVAFKP. The segment at 180 to 193 is coil 2A; sequence VEVDDYARKLSEIW. The linker 2 stretch occupies residues 194–199; the sequence is QGAVEE. The interval 200–314 is coil 2B; that stretch reads YKSEVSVLEA…EVATYRSLLE (115 aa). Positions 315-1744 are tail; it reads AESTRIYTDY…KKALRWKRMF (1430 aa). 2 stretches are compositionally biased toward basic and acidic residues: residues 341–371 and 785–815; these read RRRQ…KNEL and HSHH…DKSS. 7 disordered regions span residues 341–372, 785–816, 976–996, 1032–1093, 1340–1470, 1485–1506, and 1560–1722; these read RRRQ…NELQ, HSHH…KSSE, EENQ…DIEE, SMED…QQED, DSDL…FGDV, SGLA…SMEN, and AREK…LNGH. The segment covering 980 to 990 has biased composition (polar residues); that stretch reads LSENEGNQNFG. Over residues 1034-1056 the composition is skewed to acidic residues; that stretch reads EDEEEQNNPETEDNIGLEQESDQ. Basic and acidic residues predominate over residues 1074 to 1086; the sequence is VVFKPEDMSDKSE. Residues 1340–1351 show a composition bias toward acidic residues; the sequence is DSDLESTEEQVQ. A compositionally biased stretch (basic and acidic residues) spans 1352-1367; it reads ETERIPFKPEDSKMEN. Acidic residues predominate over residues 1368 to 1377; that stretch reads ENSESEESVD. Over residues 1386-1398 the composition is skewed to basic and acidic residues; that stretch reads HKSEEFEISKDYQ. Over residues 1412–1421 the composition is skewed to acidic residues; sequence LEDEFEDLTE. Positions 1423-1432 are enriched in basic and acidic residues; sequence PDVHEEHQNN. The segment covering 1433-1442 has biased composition (polar residues); it reads DDSGASTFIT. The span at 1445 to 1460 shows a compositional bias: basic and acidic residues; it reads DEDKEREVRESVSKDE. Positions 1496-1505 are enriched in acidic residues; it reads DNEESEDSME. Polar residues-rich tracts occupy residues 1576-1586, 1597-1621, and 1629-1639; these read EFTNENQSASP, EDSV…TSIS, and SNISTTEQSST. Acidic residues predominate over residues 1680–1691; the sequence is RSEDEELDDEGS. The segment covering 1698–1709 has biased composition (basic and acidic residues); that stretch reads NDEKANGEHKDV.

The protein belongs to the intermediate filament family. As to expression, growth cones of embryonic vertebrate neurons.

This is Tanabin from Xenopus laevis (African clawed frog).